The chain runs to 122 residues: Large ribosomal subunit protein bL12 (122 aa).

Belongs to the bacterial ribosomal protein bL12 family. In terms of assembly, homodimer. Part of the ribosomal stalk of the 50S ribosomal subunit. Forms a multimeric L10(L12)X complex, where L10 forms an elongated spine to which 2 to 4 L12 dimers bind in a sequential fashion. Binds GTP-bound translation factors.

Its function is as follows. Forms part of the ribosomal stalk which helps the ribosome interact with GTP-bound translation factors. Is thus essential for accurate translation. The protein is Large ribosomal subunit protein bL12 of Stenotrophomonas maltophilia (strain K279a).